Here is a 207-residue protein sequence, read N- to C-terminus: Outer-membrane lipoprotein LolB (207 aa).

A signal peptide spans 1 to 21 (MPMRKRHFYRLLPLASLLLAA). Cys-22 carries the N-palmitoyl cysteine lipid modification. A lipid anchor (S-diacylglycerol cysteine) is attached at Cys-22.

It belongs to the LolB family. Monomer.

The protein localises to the cell outer membrane. Its function is as follows. Plays a critical role in the incorporation of lipoproteins in the outer membrane after they are released by the LolA protein. The protein is Outer-membrane lipoprotein LolB of Yersinia pseudotuberculosis serotype O:3 (strain YPIII).